A 272-amino-acid chain; its full sequence is uncharacterized protein (272 aa).

The protein localises to the periplasm. Functionally, may be involved in ulvan degradation. Ulvan is the main polysaccharide component of the Ulvales (green seaweed) cell wall. It is composed of disaccharide building blocks comprising 3-sulfated rhamnose (Rha3S) linked to D-glucuronic acid (GlcA), L-iduronic acid (IduA), or D-xylose (Xyl). This is an uncharacterized protein from Formosa agariphila (strain DSM 15362 / KCTC 12365 / LMG 23005 / KMM 3901 / M-2Alg 35-1).